The following is a 286-amino-acid chain: Nucleotide-binding protein Sfum_2066 (286 aa).

ATP is bound at residue 8–15 (GLSGSGKS). 59 to 62 (DIRE) provides a ligand contact to GTP.

The protein belongs to the RapZ-like family.

In terms of biological role, displays ATPase and GTPase activities. In Syntrophobacter fumaroxidans (strain DSM 10017 / MPOB), this protein is Nucleotide-binding protein Sfum_2066.